Consider the following 323-residue polypeptide: Quinolinate synthase (323 aa).

Residues histidine 37 and serine 54 each contribute to the iminosuccinate site. Cysteine 99 lines the [4Fe-4S] cluster pocket. Iminosuccinate contacts are provided by residues 125–127 and serine 142; that span reads YIN. Cysteine 185 provides a ligand contact to [4Fe-4S] cluster. Iminosuccinate contacts are provided by residues 211–213 and threonine 228; that span reads HPE. [4Fe-4S] cluster is bound at residue cysteine 278.

This sequence belongs to the quinolinate synthase family. Type 2 subfamily. [4Fe-4S] cluster is required as a cofactor.

It is found in the cytoplasm. The enzyme catalyses iminosuccinate + dihydroxyacetone phosphate = quinolinate + phosphate + 2 H2O + H(+). It functions in the pathway cofactor biosynthesis; NAD(+) biosynthesis; quinolinate from iminoaspartate: step 1/1. Catalyzes the condensation of iminoaspartate with dihydroxyacetone phosphate to form quinolinate. The chain is Quinolinate synthase from Trichodesmium erythraeum (strain IMS101).